The chain runs to 79 residues: D-alanyl carrier protein (79 aa).

The Carrier domain occupies 2-79 (AEFKEQVLDI…MVIKKLEEIR (78 aa)). An O-(pantetheine 4'-phosphoryl)serine modification is found at serine 37.

It belongs to the DltC family. 4'-phosphopantetheine is transferred from CoA to a specific serine of apo-DCP.

The protein resides in the cytoplasm. Its pathway is cell wall biogenesis; lipoteichoic acid biosynthesis. Carrier protein involved in the D-alanylation of lipoteichoic acid (LTA). The loading of thioester-linked D-alanine onto DltC is catalyzed by D-alanine--D-alanyl carrier protein ligase DltA. The DltC-carried D-alanyl group is further transferred to cell membrane phosphatidylglycerol (PG) by forming an ester bond, probably catalyzed by DltD. D-alanylation of LTA plays an important role in modulating the properties of the cell wall in Gram-positive bacteria, influencing the net charge of the cell wall. This chain is D-alanyl carrier protein, found in Bacillus mycoides (strain KBAB4) (Bacillus weihenstephanensis).